An 849-amino-acid chain; its full sequence is Putative endoplasmic reticulum mannosidase MNL2 (849 aa).

The Cytoplasmic segment spans residues 1–12; sequence MSIARLVYSLFR. A helical; Signal-anchor for type II membrane protein transmembrane segment spans residues 13-32; it reads RVRSVLLLFITISLLFYYTF. The Lumenal segment spans residues 33–849; the sequence is QNEIDILNSY…TQGGHIIKKK (817 aa). Residue N45 is glycosylated (N-linked (GlcNAc...) asparagine). The tract at residues 56–79 is disordered; sequence HNTEGSSKLDPPDLSSTGSDRIAT. An intrachain disulfide couples C559 to C598.

Belongs to the glycosyl hydrolase 47 family. Ca(2+) is required as a cofactor.

Its subcellular location is the endoplasmic reticulum membrane. Its pathway is protein modification; protein glycosylation. Functionally, putative mannosidase involved in glycoprotein quality control since it is involved in the targeting of misfolded glycoproteins for ER-associated protein degradation (ERAD). In Saccharomyces cerevisiae (strain ATCC 204508 / S288c) (Baker's yeast), this protein is Putative endoplasmic reticulum mannosidase MNL2 (MNL2).